The primary structure comprises 267 residues: NAD kinase 2 (267 aa).

Asp-52 serves as the catalytic Proton acceptor. Residues 52 to 53 (DA), 124 to 125 (NE), Arg-151, Asp-153, 164 to 169 (TAYNKS), and Ala-188 contribute to the NAD(+) site.

Belongs to the NAD kinase family. The cofactor is a divalent metal cation.

Its subcellular location is the cytoplasm. The catalysed reaction is NAD(+) + ATP = ADP + NADP(+) + H(+). Functionally, involved in the regulation of the intracellular balance of NAD and NADP, and is a key enzyme in the biosynthesis of NADP. Catalyzes specifically the phosphorylation on 2'-hydroxyl of the adenosine moiety of NAD to yield NADP. The protein is NAD kinase 2 of Bacillus cereus (strain ATCC 10987 / NRS 248).